Consider the following 167-residue polypeptide: Phosphopantetheine adenylyltransferase (167 aa).

Position 11 (Ser11) interacts with substrate. ATP-binding positions include 11-12 (SF) and His19. Substrate is bound by residues Lys43, Thr76, and Arg90. ATP contacts are provided by residues 91 to 93 (GIR), Glu101, and 126 to 132 (YDALSST).

Belongs to the bacterial CoaD family. In terms of assembly, homohexamer. Mg(2+) is required as a cofactor.

Its subcellular location is the cytoplasm. The enzyme catalyses (R)-4'-phosphopantetheine + ATP + H(+) = 3'-dephospho-CoA + diphosphate. The protein operates within cofactor biosynthesis; coenzyme A biosynthesis; CoA from (R)-pantothenate: step 4/5. Functionally, reversibly transfers an adenylyl group from ATP to 4'-phosphopantetheine, yielding dephospho-CoA (dPCoA) and pyrophosphate. The protein is Phosphopantetheine adenylyltransferase of Lacticaseibacillus casei (strain BL23) (Lactobacillus casei).